Consider the following 280-residue polypeptide: 3-methyl-2-oxobutanoate hydroxymethyltransferase (280 aa).

Residues aspartate 49 and aspartate 88 each contribute to the Mg(2+) site. Residues 49 to 50 (DS), aspartate 88, and lysine 118 each bind 3-methyl-2-oxobutanoate. Glutamate 120 provides a ligand contact to Mg(2+). The active-site Proton acceptor is the glutamate 187.

Belongs to the PanB family. Homodecamer; pentamer of dimers. Mg(2+) serves as cofactor.

It localises to the cytoplasm. It catalyses the reaction 3-methyl-2-oxobutanoate + (6R)-5,10-methylene-5,6,7,8-tetrahydrofolate + H2O = 2-dehydropantoate + (6S)-5,6,7,8-tetrahydrofolate. It functions in the pathway cofactor biosynthesis; (R)-pantothenate biosynthesis; (R)-pantoate from 3-methyl-2-oxobutanoate: step 1/2. In terms of biological role, catalyzes the reversible reaction in which hydroxymethyl group from 5,10-methylenetetrahydrofolate is transferred onto alpha-ketoisovalerate to form ketopantoate. The protein is 3-methyl-2-oxobutanoate hydroxymethyltransferase of Xanthobacter autotrophicus (strain ATCC BAA-1158 / Py2).